The following is a 226-amino-acid chain: Enolase-phosphatase E1 (226 aa).

Belongs to the HAD-like hydrolase superfamily. MasA/MtnC family. As to quaternary structure, monomer. It depends on Mg(2+) as a cofactor.

It catalyses the reaction 5-methylsulfanyl-2,3-dioxopentyl phosphate + H2O = 1,2-dihydroxy-5-(methylsulfanyl)pent-1-en-3-one + phosphate. It functions in the pathway amino-acid biosynthesis; L-methionine biosynthesis via salvage pathway; L-methionine from S-methyl-5-thio-alpha-D-ribose 1-phosphate: step 3/6. The protein operates within amino-acid biosynthesis; L-methionine biosynthesis via salvage pathway; L-methionine from S-methyl-5-thio-alpha-D-ribose 1-phosphate: step 4/6. Functionally, bifunctional enzyme that catalyzes the enolization of 2,3-diketo-5-methylthiopentyl-1-phosphate (DK-MTP-1-P) into the intermediate 2-hydroxy-3-keto-5-methylthiopentenyl-1-phosphate (HK-MTPenyl-1-P), which is then dephosphorylated to form the acireductone 1,2-dihydroxy-3-keto-5-methylthiopentene (DHK-MTPene). The sequence is that of Enolase-phosphatase E1 from Shewanella sp. (strain ANA-3).